A 258-amino-acid polypeptide reads, in one-letter code: 1-(5-phosphoribosyl)-5-[(5-phosphoribosylamino)methylideneamino] imidazole-4-carboxamide isomerase 2 (258 aa).

Asp14 serves as the catalytic Proton acceptor. Asp140 acts as the Proton donor in catalysis.

The protein belongs to the HisA/HisF family.

It localises to the cytoplasm. The enzyme catalyses 1-(5-phospho-beta-D-ribosyl)-5-[(5-phospho-beta-D-ribosylamino)methylideneamino]imidazole-4-carboxamide = 5-[(5-phospho-1-deoxy-D-ribulos-1-ylimino)methylamino]-1-(5-phospho-beta-D-ribosyl)imidazole-4-carboxamide. The protein operates within amino-acid biosynthesis; L-histidine biosynthesis; L-histidine from 5-phospho-alpha-D-ribose 1-diphosphate: step 4/9. The sequence is that of 1-(5-phosphoribosyl)-5-[(5-phosphoribosylamino)methylideneamino] imidazole-4-carboxamide isomerase 2 (hisA2) from Photorhabdus laumondii subsp. laumondii (strain DSM 15139 / CIP 105565 / TT01) (Photorhabdus luminescens subsp. laumondii).